The following is a 441-amino-acid chain: AP-2 complex subunit mu (441 aa).

One can recognise an MHD domain in the interval 174-440; the sequence is RNELFLDVIE…IGRSGLYETR (267 aa).

The protein belongs to the adapter complexes medium subunit family. As to quaternary structure, adapter protein complex 2 (AP-2) is a heterotetramer composed of two large adaptins (alpha-type subunit and beta-type subunits), a medium adaptin (mu-type subunit AP50) and a small adaptin (sigma-type subunit AP17). As to expression, brain, heart, lung, liver, testis and spleen.

The protein resides in the cell membrane. It localises to the membrane. It is found in the coated pit. In terms of biological role, component of the adapter complexes which link clathrin to receptors in coated vesicles. Clathrin-associated protein complexes are believed to interact with the cytoplasmic tails of membrane proteins, leading to their selection and concentration. AP50 is a subunit of the plasma membrane adapter. Essential wnt/egl-20 signaling protein that functions in wnt/egl-20-producing cells. Required for the AP-2 complex-mediated endocytosis of membrane proteins including wntless homolog mig-14 in egl-20-producing cells. During development, regulates the migration of HSN neurons and the left and right Q neuroblasts (QL and QR, respectively) and their descendants, possibly through hox gene and wnt/egl-20 gene target mab-5, and plays a role in establishing ALM and PLM neuronal cell polarity. Regulates AWB sensory neuron cilia membrane expansion during development, potentially via localization of tub-1 and PtdIns(4,5)P2 to the ciliary base. Required for the asymmetric divisions of V5 cells. In Caenorhabditis elegans, this protein is AP-2 complex subunit mu (dpy-23).